A 304-amino-acid polypeptide reads, in one-letter code: N-acetyl-D-glucosamine kinase (304 aa).

ATP is bound by residues 4–11 (GFDMGGTK) and 133–140 (GVGGGLIV). Residues His157, Cys177, Cys179, and Cys184 each coordinate Zn(2+).

Belongs to the ROK (NagC/XylR) family. NagK subfamily.

It carries out the reaction N-acetyl-D-glucosamine + ATP = N-acetyl-D-glucosamine 6-phosphate + ADP + H(+). Its pathway is cell wall biogenesis; peptidoglycan recycling. Functionally, catalyzes the phosphorylation of N-acetyl-D-glucosamine (GlcNAc) derived from cell-wall degradation, yielding GlcNAc-6-P. The sequence is that of N-acetyl-D-glucosamine kinase from Yersinia pseudotuberculosis serotype O:3 (strain YPIII).